The primary structure comprises 217 residues: Ranaspumin (217 aa).

Disulfide bonds link C18–C67, C38–C114, C125–C168, and C146–C207.

Monomer. As to expression, exclusively expressed in females in the early oviduct, the glandular part of the oviduct (pars convoluta dilata) and in the cloaca.

It is found in the secreted. Its function is as follows. Acts as a surfactant. Is the major protein constituent (45%) of foam nests. Has no antimicrobial activity, no larvicidal activity, and is not toxic to mice. The protein is Ranaspumin of Leptodactylus vastus (Northeastern pepper frog).